Reading from the N-terminus, the 282-residue chain is 2,3,4,5-tetrahydropyridine-2,6-dicarboxylate N-succinyltransferase (282 aa).

Arginine 109 and aspartate 146 together coordinate substrate.

The protein belongs to the transferase hexapeptide repeat family. Homotrimer.

The protein resides in the cytoplasm. The enzyme catalyses (S)-2,3,4,5-tetrahydrodipicolinate + succinyl-CoA + H2O = (S)-2-succinylamino-6-oxoheptanedioate + CoA. The protein operates within amino-acid biosynthesis; L-lysine biosynthesis via DAP pathway; LL-2,6-diaminopimelate from (S)-tetrahydrodipicolinate (succinylase route): step 1/3. In Bartonella quintana (strain Toulouse) (Rochalimaea quintana), this protein is 2,3,4,5-tetrahydropyridine-2,6-dicarboxylate N-succinyltransferase.